A 233-amino-acid chain; its full sequence is Ribonuclease 3 (233 aa).

The region spanning 4–126 is the RNase III domain; the sequence is LNKLMERLGH…IVGAIYIDAG (123 aa). Residue glutamate 39 participates in Mg(2+) binding. Residue aspartate 43 is part of the active site. Positions 112 and 115 each coordinate Mg(2+). Glutamate 115 is an active-site residue. Residues 153–222 form the DRBM domain; sequence DAKSLLQEWL…AKRFLELLDD (70 aa).

Belongs to the ribonuclease III family. In terms of assembly, homodimer. Mg(2+) is required as a cofactor.

It is found in the cytoplasm. The enzyme catalyses Endonucleolytic cleavage to 5'-phosphomonoester.. In terms of biological role, digests double-stranded RNA. Involved in the processing of primary rRNA transcript to yield the immediate precursors to the large and small rRNAs (23S and 16S). Processes some mRNAs, and tRNAs when they are encoded in the rRNA operon. Processes pre-crRNA and tracrRNA of type II CRISPR loci if present in the organism. This is Ribonuclease 3 from Coxiella burnetii (strain CbuK_Q154) (Coxiella burnetii (strain Q154)).